The sequence spans 173 residues: Shikimate kinase (173 aa).

14–19 (GAGKST) contacts ATP. Ser-18 provides a ligand contact to Mg(2+). Residues Asp-36, Arg-60, and Gly-82 each coordinate substrate. Arg-120 contributes to the ATP binding site. Arg-140 provides a ligand contact to substrate. Gln-157 serves as a coordination point for ATP.

The protein belongs to the shikimate kinase family. As to quaternary structure, monomer. Mg(2+) is required as a cofactor.

The protein localises to the cytoplasm. It catalyses the reaction shikimate + ATP = 3-phosphoshikimate + ADP + H(+). It functions in the pathway metabolic intermediate biosynthesis; chorismate biosynthesis; chorismate from D-erythrose 4-phosphate and phosphoenolpyruvate: step 5/7. Catalyzes the specific phosphorylation of the 3-hydroxyl group of shikimic acid using ATP as a cosubstrate. This is Shikimate kinase from Baumannia cicadellinicola subsp. Homalodisca coagulata.